Here is an 860-residue protein sequence, read N- to C-terminus: Endo-1,4-beta-xylanase B (860 aa).

The N-terminal stretch at 1–20 (MKFSSANKILFSGLVASANA) is a signal peptide. Positions 21 to 324 (YDLLKDYAGD…KPVYNTLLNI (304 aa)) constitute a GH10 domain. Residue E144 is the Proton donor of the active site. Catalysis depends on E255, which acts as the Nucleophile. C278 and C284 are oxidised to a cystine. N295, N309, N359, and N374 each carry an N-linked (GlcNAc...) asparagine glycan. Polar residues-rich tracts occupy residues 330-362 (RPASSSAKTLPGNSKSKTLPGVNSKTLPGNKSK) and 371-418 (LPGN…NSKT). A disordered region spans residues 330 to 793 (RPASSSAKTL…TKTLPGGACK (464 aa)). Repeat 1 spans residues 375 to 382 (KSKTLPGG). The segment at 375–782 (KSKTLPGGNS…GGKSKTLPGG (408 aa)) is 47 X 8 AA tandem repeats of [SKN]-S-K-T-L-P-G-G. Residue N390 is glycosylated (N-linked (GlcNAc...) asparagine). Repeat unit 2 spans residues 391 to 398 (KSKTLPGG). A glycan (N-linked (GlcNAc...) asparagine) is linked at N406. 45 tandem repeats follow at residues 415-422 (NSKTLPGG), 431-438 (NSKTLPGG), 439-446 (KSKTLPGG), 447-454 (NSKTLPGG), 455-462 (KSKTLPGG), 463-470 (NSKTLPGG), 471-478 (SSKTLPGG), 479-486 (KSKTLPGG), 487-494 (NSKTLPGG), 495-502 (SSKTLPGG), 503-510 (KSKTLPGG), 511-518 (SSKTLPGG), 519-526 (KSKTLPGG), 527-534 (NSKTLPGG), 535-542 (NSKTLPGG), 543-550 (SSKTLPGG), 551-558 (KSKTLPGG), 559-566 (NSKTLPGG), 567-574 (SSKTLPGG), 575-582 (KSKTLPGG), 583-590 (NSKTLPGG), 591-598 (NSKTLPGG), 599-606 (KSKTLPGG), 607-614 (NSKTLPGG), 615-622 (SSKTLPGG), 623-630 (KSKTLPGG), 631-638 (SSKTLPGG), 639-646 (KSKTLPGG), 647-654 (NSKTLPGG), 655-662 (NSKTLPGG), 663-670 (SSKTLPGG), 671-678 (KSKTLPGG), 679-686 (SSKTLPGG), 687-694 (KSKTLPGG), 695-702 (NSKTLPGG), 703-710 (KSKTLPGG), 711-718 (NSKTLPGG), 719-726 (KSKTLPGG), 727-734 (NSKTLPGG), 735-742 (KSKTLPGG), 743-750 (NSKTLPGG), 751-758 (SSKTLPGG), 759-766 (KSKTLPGG), 767-774 (NSKTLPGG), and 775-782 (KSKTLPGG). 2 stretches are compositionally biased toward polar residues: residues 461–474 (GGNSKTLPGGSSKT) and 485–498 (GGNSKTLPGGSSKT). Polar residues-rich tracts occupy residues 525–546 (GGNSKTLPGGNSKTLPGGSSKT), 557–570 (GGNSKTLPGGSSKT), 581–594 (GGNSKTLPGGNSKT), and 605–618 (GGNSKTLPGGSSKT). A compositionally biased stretch (polar residues) spans 645–666 (GGNSKTLPGGNSKTLPGGSSKT). Residues 741–754 (GGNSKTLPGGSSKT) are compositionally biased toward polar residues. In terms of domain architecture, CBM1 spans 824-860 (NCAAKWGQCGGNGFNGPTCCQNGSRCQFVNEWYSQCL). N845 is a glycosylation site (N-linked (GlcNAc...) asparagine).

The protein belongs to the glycosyl hydrolase 10 (cellulase F) family.

The protein localises to the secreted. It catalyses the reaction Endohydrolysis of (1-&gt;4)-beta-D-xylosidic linkages in xylans.. Its pathway is glycan degradation; xylan degradation. Its function is as follows. Endo-1,4-beta-xylanase involved in the hydrolysis of xylan, a major structural heterogeneous polysaccharide found in plant biomass representing the second most abundant polysaccharide in the biosphere, after cellulose. Hydrolyzes both unsubstituted (oat spelts) and highly substituted (rye and wheat) forms of arabinoxylanslans. This chain is Endo-1,4-beta-xylanase B (xynB), found in Neocallimastix patriciarum (Rumen fungus).